A 238-amino-acid chain; its full sequence is Protein odd-skipped-related 2 (238 aa).

Residues 105-126 are disordered; the sequence is EDPPVTGQSRLSPERRPARGRL. 3 C2H2-type zinc fingers span residues 134–156, 162–184, and 190–212; these read FICR…ERTH, YTCD…RYIH, and FKCQ…KTLH.

This sequence belongs to the Odd C2H2-type zinc-finger protein family. As to expression, at the 8-somite stage, expressed in the pronephros, with weak generalized expression elsewhere. At 24 hpf, expressed in the kidney tubules and the anterior duct, and also in the gut. At 60 hpf, expressed in the tubules and the pectoral fin buds.

The protein resides in the nucleus. Its function is as follows. Transcriptional repressor. Required for pronephric kidney development. The chain is Protein odd-skipped-related 2 from Danio rerio (Zebrafish).